We begin with the raw amino-acid sequence, 309 residues long: Histone-lysine N-methyltransferase SETMAR (309 aa).

In terms of domain architecture, Pre-SET spans 74–137; that stretch reads PGCACIETPC…RCRNRVVQNG (64 aa). Residues cysteine 76, cysteine 78, cysteine 83, cysteine 88, cysteine 90, cysteine 119, cysteine 123, cysteine 125, and cysteine 129 each contribute to the Zn(2+) site. Positions 140–264 constitute an SET domain; it reads FLLQVFQTEK…PGEELSYDYS (125 aa). S-adenosyl-L-methionine contacts are provided by residues 150–152, tyrosine 193, arginine 221, and 224–225; these read KGW and NH. Zn(2+) contacts are provided by cysteine 227, cysteine 288, cysteine 290, and cysteine 295. The Post-SET domain occupies 284–300; the sequence is PRKPCYCGAQSCTTFLP.

The protein belongs to the class V-like SAM-binding methyltransferase superfamily.

It localises to the nucleus. It is found in the chromosome. It catalyses the reaction L-lysyl(36)-[histone H3] + 2 S-adenosyl-L-methionine = N(6),N(6)-dimethyl-L-lysyl(36)-[histone H3] + 2 S-adenosyl-L-homocysteine + 2 H(+). Its function is as follows. Histone methyltransferase that methylates 'Lys-4' and 'Lys-36' of histone H3, 2 specific tags for epigenetic transcriptional activation. Specifically mediates dimethylation of H3 'Lys-36'. The polypeptide is Histone-lysine N-methyltransferase SETMAR (Mus musculus (Mouse)).